The following is a 388-amino-acid chain: Putative O-antigen polymerase (388 aa).

9 helical membrane passes run 23 to 43 (IFYPAVCVNIIFALVLLGYEI), 57 to 77 (LIFLLCNVLTFTLSCLLTESV), 97 to 117 (VHNVGLLVISFSMIYICMRLS), 143 to 163 (NFSAYMQPIILTTFALFIWSK), 180 to 200 (IVFIFAIILNTGKQIVFMVII), 215 to 235 (VYLITAVGVLFSLYMLFLRGL), 312 to 332 (ISAELSYLMMVIHGCISGVLW), 338 to 358 (YISVKIFYSYFIYTFSFIFYH), and 361 to 381 (FMTNISSWIQITLCIIVFSQF).

It localises to the cell inner membrane. May function in vitro as a polymerase that catalyzes the polymerization of the O-antigen repeat units on the periplasmic face of the inner membrane, leading to the formation of the lipid-linked O-antigen molecule. However, E.coli K12 strains do not normally produce the O-antigen in vivo due to mutations in the rfb gene cluster. K12 strains are phenotypically rough, their lipopolysaccharide having a complete core structure, but no O-antigen. This Escherichia coli (strain K12) protein is Putative O-antigen polymerase.